The following is a 362-amino-acid chain: Adenosine deaminase (362 aa).

His41 and His43 together coordinate Zn(2+). A purine D-ribonucleoside is bound at residue 43-45; the sequence is HLD. A gating helix loop; regulates binding affinity for substrates and thus substrate selectivity region spans residues 169–183; sequence IGETGISEESLRKAA. Gly200 serves as a coordination point for a purine D-ribonucleoside. His225 contributes to the Zn(2+) binding site. 3 residues coordinate a purine D-ribonucleoside: Glu228, His252, and Asp309. Asp309 contributes to the Zn(2+) binding site.

It belongs to the metallo-dependent hydrolases superfamily. Adenosine and AMP deaminases family. Zn(2+) is required as a cofactor.

The catalysed reaction is adenosine + H2O + H(+) = inosine + NH4(+). Its pathway is purine metabolism; purine nucleoside salvage. Its activity is regulated as follows. Inhibited by coformycin but not by methylthiocoformycin (MT-coformycin). Functionally, catalyzes the hydrolytic deamination of adenosine to produce inosine. Unlike other Plasmodium adenosine deaminases, does not catalyze the deamination of 5'-methylthioadenosine (MTA). Plays an essential role in the purine salvage pathway which allows the parasite to use host cell purines for the synthesis of nucleic acids. The chain is Adenosine deaminase from Plasmodium gallinaceum.